The sequence spans 126 residues: MSALDNSIRVEVKTEYIEQQSSPEDEKYLFSYTITIINLGEQAAKLETRHWIITDANGKTSEVQGAGVVGETPTIPPNTAYQYTSGTVLDTPFGIMYGTYGMVSESGEHFNAIIKPFRLATPGLLH.

Residues 2-126 (SALDNSIRVE…FRLATPGLLH (125 aa)) enclose the ApaG domain.

The polypeptide is Protein ApaG (Shewanella oneidensis (strain ATCC 700550 / JCM 31522 / CIP 106686 / LMG 19005 / NCIMB 14063 / MR-1)).